The sequence spans 332 residues: Phenylalanine--tRNA ligase alpha subunit (332 aa).

Residue E252 coordinates Mg(2+).

This sequence belongs to the class-II aminoacyl-tRNA synthetase family. Phe-tRNA synthetase alpha subunit type 1 subfamily. In terms of assembly, tetramer of two alpha and two beta subunits. Mg(2+) serves as cofactor.

The protein localises to the cytoplasm. It catalyses the reaction tRNA(Phe) + L-phenylalanine + ATP = L-phenylalanyl-tRNA(Phe) + AMP + diphosphate + H(+). In Marinobacter nauticus (strain ATCC 700491 / DSM 11845 / VT8) (Marinobacter aquaeolei), this protein is Phenylalanine--tRNA ligase alpha subunit.